Reading from the N-terminus, the 417-residue chain is Neuropeptide FF receptor 2 (417 aa).

Over 1–45 (MSEKWDSNSSESWNHIWSGNDTQHHWYSDINITYVNYYLHQPQVA) the chain is Extracellular. N-linked (GlcNAc...) asparagine glycans are attached at residues Asn8, Asn20, and Asn31. Residues 46 to 66 (AVFISSYLLIFVLCMVGNTVV) traverse the membrane as a helical segment. The Cytoplasmic segment spans residues 67–82 (CFIVIRNRHMHTVTNF). A helical membrane pass occupies residues 83-103 (FILNLAISDLLVGIFCMPITL). Residues 104 to 119 (LDNIIAGWPFGSSMCK) lie on the Extracellular side of the membrane. An intrachain disulfide couples Cys118 to Cys206. The helical transmembrane segment at 120–140 (ISGLVQGISVAASVFTLVAIA) threads the bilayer. Residues 141–160 (VDRFRCVVYPFKPKLTVKTA) are Cytoplasmic-facing. Residues 161-181 (FVTIVIIWGLAIAIMTPSAIM) form a helical membrane-spanning segment. Over 182 to 217 (LHVQEEKYYRVRLSSHNKTSTVYWCREDWPRHEMRR) the chain is Extracellular. Residue Asn198 is glycosylated (N-linked (GlcNAc...) asparagine). The helical transmembrane segment at 218–238 (IYTTVLFATIYLAPLSLIVIM) threads the bilayer. Over 239-274 (YARIGASLFKTAAHCTGKQRPVQWHVSKKKQKVIKM) the chain is Cytoplasmic. A helical membrane pass occupies residues 275-295 (LLTVALLFILSWLPLWTLMML). Topologically, residues 296–310 (SDYTDLSPNKLRIIN) are extracellular. A helical transmembrane segment spans residues 311–331 (IYIYPFAHWLAFCNSSVNPII). Residues 332–417 (YGFFNENFRN…MGEATNSTVA (86 aa)) are Cytoplasmic-facing. The interval 382 to 401 (SQNPGGENLGCGKSADNPTQ) is disordered.

This sequence belongs to the G-protein coupled receptor 1 family.

It localises to the cell membrane. Its function is as follows. Receptor for NPAF (A-18-F-amide) and NPFF (F-8-F-amide) neuropeptides, also known as morphine-modulating peptides. Can also be activated by a variety of naturally occurring or synthetic FMRF-amide like ligands. This receptor mediates its action by association with G proteins that activate a phosphatidylinositol-calcium second messenger system. The sequence is that of Neuropeptide FF receptor 2 (Npffr2) from Mus musculus (Mouse).